We begin with the raw amino-acid sequence, 91 residues long: Mercuric transport protein periplasmic component (91 aa).

A signal peptide spans M1–A19. One can recognise an HMA domain in the interval Q22–S88. Hg(2+)-binding residues include C33 and C36.

It belongs to the MerP family. In terms of assembly, monomer.

It is found in the periplasm. Involved in mercury resistance. Acts as a mercury scavenger that specifically binds to a mercuric ion in the periplasm and probably passes it to the cytoplasmic mercuric reductase MerA via the mercuric transport protein MerT. This chain is Mercuric transport protein periplasmic component, found in Serratia marcescens.